Reading from the N-terminus, the 138-residue chain is Growth factor (138 aa).

The first 19 residues, 1-19 (MSMKYLMLLFAAMIIRSFA), serve as a signal peptide directing secretion. N-linked (GlcNAc...) asparagine; by host glycosylation is present at N34. In terms of domain architecture, EGF-like spans 41-81 (AIRLCGPEGDGYCLHGDCIHARDIDGMYCRCSHGYTGIRCQ). Cystine bridges form between C45–C58, C53–C69, and C71–C80. N-linked (GlcNAc...) asparagine; by host glycosylation occurs at N95.

Belongs to the orthopoxvirus OPG019 family.

The protein resides in the secreted. Its function is as follows. Stimulates cellular proliferation (hyperplasia)and mobility around infected cells to promote rapid and efficient spread of infection. This is Growth factor (OPG019) from Rabbitpox virus (strain Utrecht) (RPV).